Here is a 998-residue protein sequence, read N- to C-terminus: Kinesin-like protein KIF19 (998 aa).

In terms of domain architecture, Kinesin motor spans Gln11 to Ile346. An ATP-binding site is contributed by Gly104–Thr111. Coiled coils occupy residues His360–Ala391 and Glu424–Ile452. The segment covering Glu482–Asp494 has biased composition (basic and acidic residues). Residues Glu482–Leu503 are disordered. Residues Glu507–Arg552 are a coiled coil. Composition is skewed to polar residues over residues Ser662–Pro676, Lys684–Ala697, Ser746–Leu761, and Thr836–Glu852. Disordered regions lie at residues Ser662 to Glu706, Ser746 to Pro765, Gly794 to Leu911, and Lys948 to Asn998. The segment covering His989–Asn998 has biased composition (basic and acidic residues).

Belongs to the TRAFAC class myosin-kinesin ATPase superfamily. Kinesin family.

It localises to the cytoplasm. It is found in the cytoskeleton. The protein resides in the cell projection. The protein localises to the cilium. Functionally, plus end-directed microtubule-dependent motor protein that regulates the length of motile cilia by mediating depolymerization of microtubules at ciliary tips. This Homo sapiens (Human) protein is Kinesin-like protein KIF19 (KIF19).